The primary structure comprises 727 residues: Elongation factor 2 (727 aa).

Residues 19–260 (DQIRNMGICA…MSIKHLPNPL (242 aa)) form the tr-type G domain. Residues 28–35 (AHIDHGKT), 94–98 (DTPGH), and 148–151 (NKVD) each bind GTP. H603 bears the Diphthamide mark.

The protein belongs to the TRAFAC class translation factor GTPase superfamily. Classic translation factor GTPase family. EF-G/EF-2 subfamily.

It localises to the cytoplasm. Functionally, catalyzes the GTP-dependent ribosomal translocation step during translation elongation. During this step, the ribosome changes from the pre-translocational (PRE) to the post-translocational (POST) state as the newly formed A-site-bound peptidyl-tRNA and P-site-bound deacylated tRNA move to the P and E sites, respectively. Catalyzes the coordinated movement of the two tRNA molecules, the mRNA and conformational changes in the ribosome. The sequence is that of Elongation factor 2 from Methanococcus maripaludis (strain C5 / ATCC BAA-1333).